We begin with the raw amino-acid sequence, 323 residues long: Methenyltetrahydromethanopterin cyclohydrolase (323 aa).

The protein belongs to the MCH family.

Its subcellular location is the cytoplasm. The catalysed reaction is 5,10-methenyl-5,6,7,8-tetrahydromethanopterin + H2O = N(5)-formyl-5,6,7,8-tetrahydromethanopterin + H(+). Its pathway is one-carbon metabolism; methanogenesis from CO(2); 5,10-methenyl-5,6,7,8-tetrahydromethanopterin from CO(2): step 3/3. Catalyzes the reversible interconversion of 5-formyl-H(4)MPT to methenyl-H(4)MPT(+). The sequence is that of Methenyltetrahydromethanopterin cyclohydrolase from Methanococcus vannielii (strain ATCC 35089 / DSM 1224 / JCM 13029 / OCM 148 / SB).